Consider the following 554-residue polypeptide: Glutamine--tRNA ligase (554 aa).

Residues 34 to 44 (PEPNGYLHIGH) carry the 'HIGH' region motif. Residues 35–37 (EPN) and 41–47 (HIGHAKS) contribute to the ATP site. L-glutamine is bound by residues Asp-67 and Tyr-212. Residues Thr-231, 261–262 (RL), and 269–271 (MSK) contribute to the ATP site. Residues 268 to 272 (VMSKR) carry the 'KMSKS' region motif. The interval 317–324 (TKQDNTIE) is interaction with tRNA.

The protein belongs to the class-I aminoacyl-tRNA synthetase family. In terms of assembly, monomer.

It is found in the cytoplasm. The enzyme catalyses tRNA(Gln) + L-glutamine + ATP = L-glutaminyl-tRNA(Gln) + AMP + diphosphate. In Escherichia coli O157:H7, this protein is Glutamine--tRNA ligase.